Consider the following 329-residue polypeptide: Probable alpha-1,2-galactosyltransferase gmh1 (329 aa).

The Cytoplasmic portion of the chain corresponds to 1-14; the sequence is MLSFFTKNTLTKRK. A helical; Signal-anchor for type II membrane protein transmembrane segment spans residues 15 to 35; that stretch reads LIMLALAIVFTFFAFGLYFIP. The Lumenal portion of the chain corresponds to 36 to 329; that stretch reads HDEISVFDFK…LWTKYKDKII (294 aa). 2 N-linked (GlcNAc...) asparagine glycosylation sites follow: asparagine 127 and asparagine 169.

This sequence belongs to the glycosyltransferase 34 family.

It localises to the golgi apparatus membrane. This Schizosaccharomyces pombe (strain 972 / ATCC 24843) (Fission yeast) protein is Probable alpha-1,2-galactosyltransferase gmh1 (gmh1).